Reading from the N-terminus, the 566-residue chain is Protein kintoun (566 aa).

3 disordered regions span residues 183 to 298, 399 to 467, and 493 to 552; these read KYKG…TAPQ, EEEE…AETG, and QLEE…ESRI. A compositionally biased stretch (low complexity) spans 208 to 290; sequence PQQTTGPQQP…HQPTDPQQTT (83 aa). Basic and acidic residues predominate over residues 399-424; that stretch reads EEEERRAEEEESRKGGDEDGELHPDC. Residues 440-467 are compositionally biased toward low complexity; sequence TPAADTHTPAADTHTPAADTHTPAAETG. Residues 535–550 are compositionally biased toward basic and acidic residues; that stretch reads DPAHTDPAHTDPEMES.

It belongs to the PIH1 family. Kintoun subfamily.

The protein resides in the cytoplasm. It localises to the dynein axonemal particle. Functionally, required for cytoplasmic pre-assembly of axonemal dyneins, thereby playing a central role in motility in cilia and flagella. Involved in pre-assembly of dynein arm complexes in the cytoplasm before intraflagellar transport loads them for the ciliary compartment. The chain is Protein kintoun from Danio rerio (Zebrafish).